The chain runs to 901 residues: MDHVPALVLAGCCFLALLPGWACGLGSMSSIAVSYGEDGPVFCGLNSDGSHLVACFGADASVLYGAPPNIPFLGLTAGDGFVCGLLLDTRQPYCWGSNSYVKSGVPQPMVEGARYSELSAGDNHLCALRAAQDGGRGSSAATSLIDCWGYNMTATHAVDEAVSTVSAGSVFNCGLFARNRTVFCWGDETVSGVVGLAPRDLHFQSIGAGGYHVCGVLENAQVFCWGRSLEMQQVVPSSAIGDGDVNIVPMDAMSTVVGGRFHACGIRSLDHQVACWGFTLHNSTSPPKGLKMYALVAGDYFTCGVPAETSLMPRCWGNSGPLALPMAVPPGICVPTACSHGYYEYVNHGEVGSIKVCKPANSRLCLPCSTGCPEGLYESSPCNATADRVCQFDCLKCVTDECLSFCLSQKRTKSRKLMAFQMRIFVAEIVFAVVLVLSVSVTTCLYVRHKLRHCQCSNRELRLAKSTAYSFRKDNMKIQPDMEDLKIRRAQEFSYEELEQATGGFSEDSQVGKGSFSCVFKGILRDGTVVAVKRAIKASDVKKSSKEFHNELDLLSRLNHAHLLNLLGYCEDGSERLLVYEFMAHGSLYQHLHGKDPNLKKRLNWARRVTIAVQAARGIEYLHGYACPPVIHRDIKSSNILIDEDHNARVADFGLSILGPADSGTPLSELPAGTLGYLDPEYYRLHYLTTKSDVYSFGVVLLEILSGRKAIDMQFEEGNIVEWAVPLIKAGDIFAILDPVLSPPSDLEALKKIASVACKCVRMRGKDRPSMDKVTTALEHALALLMGSPCIEQPILPTEVVLGSSRMHKVSQMSSNHSCSENELADGEDQGIGYRAPSWITFPSVTSSQRRKSSASEADIVGRRATDGRNVGSSIGDGLRSLEEEIAPASPQENLYLQHNF.

A signal peptide spans 1 to 24; that stretch reads MDHVPALVLAGCCFLALLPGWACG. Topologically, residues 25–423 are extracellular; sequence LGSMSSIAVS…SRKLMAFQMR (399 aa). 7 tandem repeats follow at residues 33 to 68, 72 to 107, 125 to 160, 162 to 195, 203 to 236, 253 to 287, and 292 to 330. The segment at 33-330 is 7 X 36 AA repeats; it reads VSYGEDGPVF…PLALPMAVPP (298 aa). 2 N-linked (GlcNAc...) asparagine glycosylation sites follow: Asn151 and Asn179. Asn282 carries N-linked (GlcNAc...) asparagine glycosylation. 3 cysteine pairs are disulfide-bonded: Cys338–Cys365, Cys368–Cys382, and Cys372–Cys390. Residues 357 to 391 form a TNFR-Cys repeat; sequence CKPANSRLCLPCSTGCPEGLYESSPCNATADRVCQ. Asn383 carries an N-linked (GlcNAc...) asparagine glycan. A helical membrane pass occupies residues 424-444; that stretch reads IFVAEIVFAVVLVLSVSVTTC. Topologically, residues 445–901 are cytoplasmic; sequence LYVRHKLRHC…QENLYLQHNF (457 aa). A Protein kinase domain is found at 505-712; it reads FSEDSQVGKG…EILSGRKAID (208 aa). ATP contacts are provided by residues 511 to 519 and Lys533; that span reads VGKGSFSCV. Residue Asp634 is the Proton acceptor of the active site. The interval 845 to 876 is disordered; the sequence is VTSSQRRKSSASEADIVGRRATDGRNVGSSIG.

This sequence belongs to the protein kinase superfamily. Ser/Thr protein kinase family. As to quaternary structure, homodimer.

It is found in the cell membrane. The protein resides in the endosome. It localises to the multivesicular body membrane. The enzyme catalyses L-seryl-[protein] + ATP = O-phospho-L-seryl-[protein] + ADP + H(+). It catalyses the reaction L-threonyl-[protein] + ATP = O-phospho-L-threonyl-[protein] + ADP + H(+). Functionally, putative receptor protein kinase. Could play a role in a differentiation signal. The CRINKLY4 (CR4) mutation affects leaf epidermis differentiation such that cell size and morphology are altered, and surface functions are compromised, allowing graft-like fusions between organs. This is Putative receptor protein kinase CRINKLY4 (CR4) from Zea mays (Maize).